The chain runs to 536 residues: MGLRPAVLLLCASVSLLGGLTFGYELAVISGALLPLQLNFGLSCLEQELLVGSLLLGALLASLVGGFLIDCYGRRRAILGSNAVLLAGSLILGLASSLPWLLLGRLSVGFAISLSSMACCIYVSELVGPRQRGVLVSLYEVGITVGILFSYGLNYVLAGSPWGWRHMFGWAAAPALLQSLSLFLLPAGAEGTAAPKDLIPLQGRETSKPGLVKPQYSFLDLFRAQDGMWSRTVVGLGLVLFQQLTGQPNVLYYASTIFRSVGFHGGSSAVLASVGLGTVKVAATLVATGLVDRAGRRVLLLFGCALMALSVSGIGLVSFAVSLDSGPSCLATSNASQQVDLPGSSGLLVRSSLPPVLHTNGDQGQLVLSVTERPIHPVITASLGPVLNTASPVPTSPILEHTLLCWSALVCMMVYVSAFSVGFGPVTWLVLSEIYPAEIRGRAFAFCSSFNWAANLFISLSFLDLIGAIGLAWTFLLYGLTAVLGLAFIYLLVPETKGQSLAEIEQQFQTSRFPLNFGHRQRIGIQYHRLDVSSAS.

The Cytoplasmic segment spans residues 1–15; sequence MGLRPAVLLLCASVS. The helical transmembrane segment at 16–36 threads the bilayer; the sequence is LLGGLTFGYELAVISGALLPL. Topologically, residues 37–48 are extracellular; it reads QLNFGLSCLEQE. The helical transmembrane segment at 49–69 threads the bilayer; it reads LLVGSLLLGALLASLVGGFLI. At 70–82 the chain is on the cytoplasmic side; it reads DCYGRRRAILGSN. The helical transmembrane segment at 83 to 103 threads the bilayer; sequence AVLLAGSLILGLASSLPWLLL. At 104 to 107 the chain is on the extracellular side; sequence GRLS. A helical transmembrane segment spans residues 108-128; that stretch reads VGFAISLSSMACCIYVSELVG. Over 129 to 132 the chain is Cytoplasmic; that stretch reads PRQR. A helical transmembrane segment spans residues 133–153; it reads GVLVSLYEVGITVGILFSYGL. The Extracellular portion of the chain corresponds to 154–166; the sequence is NYVLAGSPWGWRH. The chain crosses the membrane as a helical span at residues 167-187; sequence MFGWAAAPALLQSLSLFLLPA. The Cytoplasmic portion of the chain corresponds to 188-232; it reads GAEGTAAPKDLIPLQGRETSKPGLVKPQYSFLDLFRAQDGMWSRT. A helical transmembrane segment spans residues 233 to 253; that stretch reads VVGLGLVLFQQLTGQPNVLYY. 242-243 contacts D-glucose; that stretch reads QQ. The Extracellular segment spans residues 254-269; the sequence is ASTIFRSVGFHGGSSA. The chain crosses the membrane as a helical span at residues 270-290; it reads VLASVGLGTVKVAATLVATGL. Residues 291–298 are Cytoplasmic-facing; sequence VDRAGRRV. The helical transmembrane segment at 299–319 threads the bilayer; that stretch reads LLLFGCALMALSVSGIGLVSF. At 320-402 the chain is on the extracellular side; that stretch reads AVSLDSGPSC…VPTSPILEHT (83 aa). A helical membrane pass occupies residues 403–423; that stretch reads LLCWSALVCMMVYVSAFSVGF. At 424–442 the chain is on the cytoplasmic side; the sequence is GPVTWLVLSEIYPAEIRGR. Residue Trp-428 coordinates D-glucose. Residues 443–463 traverse the membrane as a helical segment; that stretch reads AFAFCSSFNWAANLFISLSFL. Residues 464 to 468 lie on the Extracellular side of the membrane; that stretch reads DLIGA. Residues 469–489 form a helical membrane-spanning segment; that stretch reads IGLAWTFLLYGLTAVLGLAFI. The Cytoplasmic portion of the chain corresponds to 490–536; it reads YLLVPETKGQSLAEIEQQFQTSRFPLNFGHRQRIGIQYHRLDVSSAS.

The protein belongs to the major facilitator superfamily. Sugar transporter (TC 2.A.1.1) family. Glucose transporter subfamily.

It is found in the endomembrane system. The protein localises to the cytoplasm. Its subcellular location is the perinuclear region. The enzyme catalyses D-glucose(out) = D-glucose(in). Functionally, facilitative glucose transporter required for the development of the cardiovascular system. The sequence is that of Solute carrier family 2, facilitated glucose transporter member 10 from Mus musculus (Mouse).